A 1368-amino-acid polypeptide reads, in one-letter code: DNA-directed RNA polymerase subunit beta (1368 aa).

This sequence belongs to the RNA polymerase beta chain family. As to quaternary structure, the RNAP catalytic core consists of 2 alpha, 1 beta, 1 beta' and 1 omega subunit. When a sigma factor is associated with the core the holoenzyme is formed, which can initiate transcription.

It carries out the reaction RNA(n) + a ribonucleoside 5'-triphosphate = RNA(n+1) + diphosphate. Functionally, DNA-dependent RNA polymerase catalyzes the transcription of DNA into RNA using the four ribonucleoside triphosphates as substrates. The protein is DNA-directed RNA polymerase subunit beta of Cupriavidus metallidurans (strain ATCC 43123 / DSM 2839 / NBRC 102507 / CH34) (Ralstonia metallidurans).